Consider the following 169-residue polypeptide: Putative phosphoesterase SE_0715 (169 aa).

His-34 functions as the Proton donor in the catalytic mechanism. Short sequence motifs (HXTX) lie at residues 34 to 37 (HITI) and 115 to 118 (HFTI). Residue His-115 is the Proton acceptor of the active site.

The protein belongs to the 2H phosphoesterase superfamily. YjcG family.

This chain is Putative phosphoesterase SE_0715, found in Staphylococcus epidermidis (strain ATCC 12228 / FDA PCI 1200).